A 592-amino-acid chain; its full sequence is Bifunctional dolabella-3,7-dien-18-ol synthase/dolathalia-3,7,11-triene synthase TPS20, chloroplastic (592 aa).

The N-terminal 52 residues, 1-52 (MEAITKNGSLSQTLVHCGPKSLSSFIPVRCLRFSKNPFPKKLVVTRARTSIN), are a transit peptide targeting the chloroplast. Mg(2+) contacts are provided by Asp349, Asp353, Asp491, Thr495, and Glu499. The DDXXD motif signature appears at 349 to 353 (DDLYD).

The protein belongs to the terpene synthase family. Tpsa subfamily. Mg(2+) is required as a cofactor. Mn(2+) serves as cofactor.

The protein localises to the plastid. Its subcellular location is the chloroplast. The catalysed reaction is (2E,6E,10E)-geranylgeranyl diphosphate + H2O = (3E,7E)-dolabella-3,7-dien-18-ol + diphosphate. It carries out the reaction (2E,6E,10E)-geranylgeranyl diphosphate = (3E,7E)-dolathalia-3,7,11-triene + diphosphate. Its pathway is secondary metabolite biosynthesis; terpenoid biosynthesis. Involved in the biosynthesis of diterpenes in roots. Possesses dolabella-3,7-dien-18-ol synthase activity and dolathalia-3,7,11-triene synthase activity in vitro. Catalyzes the formation of dolabella-3,7-dien-18-ol and dolathalia-3,7,11-triene from geranygeranyl diphosphate (GGPP). Does not seem to be involved in sesquiterpene biosynthesis. This Arabidopsis thaliana (Mouse-ear cress) protein is Bifunctional dolabella-3,7-dien-18-ol synthase/dolathalia-3,7,11-triene synthase TPS20, chloroplastic.